The chain runs to 519 residues: Probable cytosol aminopeptidase (519 aa).

2 residues coordinate Mn(2+): lysine 283 and aspartate 288. The active site involves lysine 295. Mn(2+) is bound by residues aspartate 306, aspartate 365, and glutamate 367. Arginine 369 is a catalytic residue.

It belongs to the peptidase M17 family. Mn(2+) is required as a cofactor.

It localises to the cytoplasm. The enzyme catalyses Release of an N-terminal amino acid, Xaa-|-Yaa-, in which Xaa is preferably Leu, but may be other amino acids including Pro although not Arg or Lys, and Yaa may be Pro. Amino acid amides and methyl esters are also readily hydrolyzed, but rates on arylamides are exceedingly low.. The catalysed reaction is Release of an N-terminal amino acid, preferentially leucine, but not glutamic or aspartic acids.. In terms of biological role, presumably involved in the processing and regular turnover of intracellular proteins. Catalyzes the removal of unsubstituted N-terminal amino acids from various peptides. In Mycobacterium ulcerans (strain Agy99), this protein is Probable cytosol aminopeptidase.